The primary structure comprises 236 residues: MHQNTNVDPQEIAKFERMAETWWDLNGEFKPLHLLNPLRLNYIDQTAGGIFGKKVLDVGCGGGILSESMARIGAEVDGLDMGDEPLEVARLHALETGVSINYVKNTAETHSQDHQAYYDVVTCMEMLEHVPDPQSVIKACCDMVKPGGFVFFSTINRNIKSYVHTILGAEYLLKMLPVGTHEHKKFIKPSELIELVDNTDLICTDALGISYNPLTGIFKYTPKVDVNYMIATRKVD.

S-adenosyl-L-methionine contacts are provided by R39, G59, D80, and M124.

It belongs to the methyltransferase superfamily. UbiG/COQ3 family.

The enzyme catalyses a 3-demethylubiquinol + S-adenosyl-L-methionine = a ubiquinol + S-adenosyl-L-homocysteine + H(+). It catalyses the reaction a 3-(all-trans-polyprenyl)benzene-1,2-diol + S-adenosyl-L-methionine = a 2-methoxy-6-(all-trans-polyprenyl)phenol + S-adenosyl-L-homocysteine + H(+). It functions in the pathway cofactor biosynthesis; ubiquinone biosynthesis. Its function is as follows. O-methyltransferase that catalyzes the 2 O-methylation steps in the ubiquinone biosynthetic pathway. This chain is Ubiquinone biosynthesis O-methyltransferase, found in Shewanella baltica (strain OS223).